Reading from the N-terminus, the 233-residue chain is Nickel import system ATP-binding protein NikE (233 aa).

The ABC transporter domain occupies 2–228 (IELKHVTFGY…DRHPYTKELV (227 aa)). Position 35–42 (35–42 (GESGCGKS)) interacts with ATP.

The protein belongs to the ABC transporter superfamily. The complex is composed of two ATP-binding proteins (NikD and NikE), two transmembrane proteins (NikB and NikC) and a solute-binding protein (NikA).

It is found in the cell membrane. It carries out the reaction Ni(2+)(out) + ATP + H2O = Ni(2+)(in) + ADP + phosphate + H(+). In terms of biological role, part of the ABC transporter complex NikABCDE (Opp2) involved in nickel import. Probably responsible for energy coupling to the transport system. This is Nickel import system ATP-binding protein NikE from Staphylococcus aureus (strain MRSA252).